The primary structure comprises 506 residues: Sodium-coupled neutral amino acid symporter 2 (506 aa).

Residues 1–23 (MKKAEMGRFNISPDEDSSSYSSN) form a disordered region. The Cytoplasmic segment spans residues 1–76 (MKKAEMGRFN…HPGTTSFGMS (76 aa)). The segment at 1 to 96 (MKKAEMGRFN…SGILGLSYAM (96 aa)) is regulates protein turnover upon amino acid deprivation. Phosphoserine occurs at positions 12, 21, 22, and 55. The chain crosses the membrane as a helical span at residues 77–96 (VFNLSNAIVGSGILGLSYAM). Residue N82 coordinates Na(+). At 97–102 (ANTGIA) the chain is on the extracellular side. Residues 103 to 123 (LFIILLTFVSIFSLYSVHLLL) form a helical membrane-spanning segment. The Cytoplasmic segment spans residues 124 to 158 (KTANEGGSLLYEQLGHKAFGMVGKLTASGSITMQN). Residues 159–177 (IGAMSSYLFIVKYELPLVI) traverse the membrane as a helical segment. The Extracellular portion of the chain corresponds to 178–188 (QALMNIEDTNG). Residues 189–209 (LWYLNGDYLVLLVSLVLILPL) form a helical membrane-spanning segment. Topologically, residues 210 to 217 (SLLRNLGY) are cytoplasmic. Residues 218–238 (LGYTSGLSLLCMMFFLIVVIF) traverse the membrane as a helical segment. Residues 239–292 (KKFQISCPAEIAFLVNETVNSSLTQPATFLPDMGFNRTESDSCQPRYFIFNSQT) lie on the Extracellular side of the membrane. C245 and C281 are oxidised to a cystine. N-linked (GlcNAc...) asparagine glycosylation is found at N258 and N274. Residues 293–313 (VYAVPILTFSFVCHPAILPIY) form a helical membrane-spanning segment. The Cytoplasmic portion of the chain corresponds to 314-329 (EELKGRSRRRMMNVSK). The chain crosses the membrane as a helical span at residues 330-350 (ISFFAMFLMYLLAALFGYLTF). The Extracellular portion of the chain corresponds to 351-371 (YGHVESELLHTYSSVMETDIL). A helical membrane pass occupies residues 372 to 392 (LLIVRLAVLVAVTLTVPVVIF). A Na(+)-binding site is contributed by T386. Over 393 to 413 (PIRSSITHLLCASKEFSWWRH) the chain is Cytoplasmic. The helical transmembrane segment at 414–434 (SVITVSILVFTNLLVIFVPNI) threads the bilayer. The Extracellular portion of the chain corresponds to 435-436 (RD). The chain crosses the membrane as a helical span at residues 437-457 (IFGFIGASAAAMLIFILPSAF). Over 458-472 (YIKLVKKEPMKSVQK) the chain is Cytoplasmic. A helical membrane pass occupies residues 473–495 (IGAMFFLLSGIVVMTGSMALIVL). Residues 496 to 506 (DWVHNAPGGGH) are Extracellular-facing.

It belongs to the amino acid/polyamine transporter 2 family. In terms of processing, polyubiquitination by NEDD4L regulates the degradation and the activity of SLC38A2.

Its subcellular location is the cell membrane. The catalysed reaction is L-alanine(in) + Na(+)(in) = L-alanine(out) + Na(+)(out). The enzyme catalyses glycine(in) + Na(+)(in) = glycine(out) + Na(+)(out). It catalyses the reaction L-serine(in) + Na(+)(in) = L-serine(out) + Na(+)(out). It carries out the reaction L-proline(in) + Na(+)(in) = L-proline(out) + Na(+)(out). The catalysed reaction is L-methionine(in) + Na(+)(in) = L-methionine(out) + Na(+)(out). The enzyme catalyses L-histidine(in) + Na(+)(in) = L-histidine(out) + Na(+)(out). It catalyses the reaction L-asparagine(in) + Na(+)(in) = L-asparagine(out) + Na(+)(out). It carries out the reaction L-glutamine(in) + Na(+)(in) = L-glutamine(out) + Na(+)(out). The catalysed reaction is L-threonine(in) + Na(+)(in) = L-threonine(out) + Na(+)(out). The enzyme catalyses L-leucine(in) + Na(+)(in) = L-leucine(out) + Na(+)(out). It catalyses the reaction L-phenylalanine(in) + Na(+)(in) = L-phenylalanine(out) + Na(+)(out). With respect to regulation, inhibited by N-methyl-D-glucamine. Inhibited by choline. Allosteric regulation of sodium ions binding by pH. Symporter that cotransports neutral amino acids and sodium ions from the extracellular to the intracellular side of the cell membrane. The transport is pH-sensitive, Li(+)-intolerant, electrogenic, driven by the Na(+) electrochemical gradient and cotransports of neutral amino acids and sodium ions with a stoichiometry of 1:1. May function in the transport of amino acids at the blood-brain barrier. May function in the transport of amino acids in the supply of maternal nutrients to the fetus through the placenta. Maintains a key metabolic glutamine/glutamate balance underpinning retrograde signaling by dendritic release of the neurotransmitter glutamate. Transports L-proline in differentiating osteoblasts for the efficient synthesis of proline-enriched proteins and provides proline essential for osteoblast differentiation and bone formation during bone development. In Bos taurus (Bovine), this protein is Sodium-coupled neutral amino acid symporter 2.